Here is a 963-residue protein sequence, read N- to C-terminus: Glycine dehydrogenase (decarboxylating) (963 aa).

At K707 the chain carries N6-(pyridoxal phosphate)lysine.

The protein belongs to the GcvP family. In terms of assembly, the glycine cleavage system is composed of four proteins: P, T, L and H. Requires pyridoxal 5'-phosphate as cofactor.

It carries out the reaction N(6)-[(R)-lipoyl]-L-lysyl-[glycine-cleavage complex H protein] + glycine + H(+) = N(6)-[(R)-S(8)-aminomethyldihydrolipoyl]-L-lysyl-[glycine-cleavage complex H protein] + CO2. In terms of biological role, the glycine cleavage system catalyzes the degradation of glycine. The P protein binds the alpha-amino group of glycine through its pyridoxal phosphate cofactor; CO(2) is released and the remaining methylamine moiety is then transferred to the lipoamide cofactor of the H protein. In Dechloromonas aromatica (strain RCB), this protein is Glycine dehydrogenase (decarboxylating).